We begin with the raw amino-acid sequence, 316 residues long: Arginine transport system permease protein ArgU (316 aa).

The segment covering 1–14 has biased composition (polar residues); that stretch reads MSDLNQGPGASTAQ. The segment at 1-20 is disordered; that stretch reads MSDLNQGPGASTAQPKPIEA. The next 6 membrane-spanning stretches (helical) occupy residues 29–49, 74–94, 108–128, 151–171, 217–237, and 251–271; these read WVAA…ALNN, IALT…LAVM, LYLW…WGLL, MFLL…AEIV, LISM…LELY, and VPML…LMVG. The region spanning 70 to 274 is the ABC transmembrane type-1 domain; the sequence is ALHTIALTLL…TSILMVGQYY (205 aa).

The protein belongs to the binding-protein-dependent transport system permease family. In terms of assembly, the complex is probably composed of two ATP-binding proteins (ArgV), two transmembrane proteins (ArgU) and a solute-binding protein (ArgT).

It is found in the cell membrane. Functionally, part of the ABC transporter complex ArgTUV involved in L-arginine import. May also transport L-citrulline. Probably responsible for the translocation of the substrate across the membrane. The sequence is that of Arginine transport system permease protein ArgU from Corynebacterium glutamicum (strain ATCC 13032 / DSM 20300 / JCM 1318 / BCRC 11384 / CCUG 27702 / LMG 3730 / NBRC 12168 / NCIMB 10025 / NRRL B-2784 / 534).